We begin with the raw amino-acid sequence, 50 residues long: Protease inhibitor 2 (50 aa).

The Kazal-like domain occupies Glu-2–Cys-50. Disulfide bonds link Cys-10/Cys-29 and Cys-18/Cys-50. Asn-30 and Asn-41 each carry an N-linked (GlcNAc...) asparagine glycan.

Functionally, serine protease inhibitor. Strongly inhibits human neutrophil elastase and trypsin, also inhibits porcine pancreatic elastase and subtilisin A. Does not inhibit chymotrypsin, plasma kallikrein, pancreatic kallikrein, thrombin or papain. This Cenchritis muricatus (Beaded periwinkle) protein is Protease inhibitor 2.